Here is a 315-residue protein sequence, read N- to C-terminus: Glutamyl-Q tRNA(Asp) synthetase (315 aa).

L-glutamate-binding positions include 21-25 (RFAPS) and E63. Positions 24–34 (PSPSGLLHFGS) match the 'HIGH' region motif. 4 residues coordinate Zn(2+): C119, C121, Y133, and C137. 2 residues coordinate L-glutamate: Y190 and R208. The 'KMSKS' region motif lies at 251-255 (KLSKQ). Residue K254 coordinates ATP.

The protein belongs to the class-I aminoacyl-tRNA synthetase family. GluQ subfamily. The cofactor is Zn(2+).

In terms of biological role, catalyzes the tRNA-independent activation of glutamate in presence of ATP and the subsequent transfer of glutamate onto a tRNA(Asp). Glutamate is transferred on the 2-amino-5-(4,5-dihydroxy-2-cyclopenten-1-yl) moiety of the queuosine in the wobble position of the QUC anticodon. The polypeptide is Glutamyl-Q tRNA(Asp) synthetase (Colwellia psychrerythraea (strain 34H / ATCC BAA-681) (Vibrio psychroerythus)).